We begin with the raw amino-acid sequence, 354 residues long: UDP-3-O-acylglucosamine N-acyltransferase (354 aa).

His258 functions as the Proton acceptor in the catalytic mechanism.

Belongs to the transferase hexapeptide repeat family. LpxD subfamily. Homotrimer.

It catalyses the reaction a UDP-3-O-[(3R)-3-hydroxyacyl]-alpha-D-glucosamine + a (3R)-hydroxyacyl-[ACP] = a UDP-2-N,3-O-bis[(3R)-3-hydroxyacyl]-alpha-D-glucosamine + holo-[ACP] + H(+). It participates in bacterial outer membrane biogenesis; LPS lipid A biosynthesis. Its function is as follows. Catalyzes the N-acylation of UDP-3-O-acylglucosamine using 3-hydroxyacyl-ACP as the acyl donor. Is involved in the biosynthesis of lipid A, a phosphorylated glycolipid that anchors the lipopolysaccharide to the outer membrane of the cell. The protein is UDP-3-O-acylglucosamine N-acyltransferase of Sinorhizobium fredii (strain NBRC 101917 / NGR234).